A 247-amino-acid polypeptide reads, in one-letter code: MSQVNMRDMLKAGCHFGHQTRYWNPKMGKYIFGARNKIHIINLEKTLPMFNEALTFVERLASGKNKILFVGTKRSAGKIVAEEAARCGSPYVDHRWLGGMLTNFKTIRQSIKRLRELEVQAEDGTFAKLTKKEALMRTRDLEKLDRSLGGIKDMGGLPDALFVIDVDHERIAITEANKLGIPVIGVVDTNSSPEGVDYIIPGNDDAIRAIQLYMGSMADAVIRGRNNVAGGTDVFVEEAPAAAAVEG.

Belongs to the universal ribosomal protein uS2 family.

The polypeptide is Small ribosomal subunit protein uS2 (Pseudomonas syringae pv. syringae (strain B728a)).